Reading from the N-terminus, the 338-residue chain is Replication factor C small subunit (338 aa).

Position 53 to 60 (53 to 60) interacts with ATP; that stretch reads GPPGVGKT.

Belongs to the activator 1 small subunits family. RfcS subfamily. In terms of assembly, heteromultimer composed of small subunits (RfcS) and large subunits (RfcL).

Its function is as follows. Part of the RFC clamp loader complex which loads the PCNA sliding clamp onto DNA. The sequence is that of Replication factor C small subunit from Methanosarcina acetivorans (strain ATCC 35395 / DSM 2834 / JCM 12185 / C2A).